Reading from the N-terminus, the 218-residue chain is Thiopurine S-methyltransferase (218 aa).

Residues tryptophan 11, leucine 46, glutamate 67, and arginine 122 each coordinate S-adenosyl-L-methionine.

It belongs to the class I-like SAM-binding methyltransferase superfamily. TPMT family.

It localises to the cytoplasm. The enzyme catalyses S-adenosyl-L-methionine + a thiopurine = S-adenosyl-L-homocysteine + a thiopurine S-methylether.. This chain is Thiopurine S-methyltransferase, found in Vibrio cholerae serotype O1 (strain ATCC 39541 / Classical Ogawa 395 / O395).